Reading from the N-terminus, the 699-residue chain is Kinesin-like protein KIF3A (699 aa).

Residues 14 to 345 (NVKVVVRCRP…LRYANRAKNI (332 aa)) form the Kinesin motor domain. 100-107 (GQTGTGKT) lines the ATP pocket. The stretch at 355–590 (PKDALLRQFQ…LSRELRLQML (236 aa)) forms a coiled coil. 2 disordered regions span residues 372 to 421 (KKLE…KMIE) and 663 to 699 (SLMK…SLLQ). Residues 376–400 (EGEEISGSDISGSEEDDDEEGEVGE) are compositionally biased toward acidic residues. Residues 672–687 (TSKGKARPKTGRRKRS) show a composition bias toward basic residues. Position 687 is a phosphoserine (serine 687). The segment at 697-699 (LLQ) is globular.

It belongs to the TRAFAC class myosin-kinesin ATPase superfamily. Kinesin family. Kinesin II subfamily. As to quaternary structure, heterodimer of KIF3A and KIF3B. Interacts with CIMAP3. Interacts with CLN3. Interacts with DCTN1. Interacts with FLCN. Interacts with AP3B1.

It localises to the cytoplasm. The protein localises to the cytoskeleton. The protein resides in the cell projection. Its subcellular location is the cilium. It is found in the microtubule organizing center. It localises to the centrosome. The protein localises to the centriole. Functionally, microtubule-based anterograde translocator for membranous organelles. Plus end-directed microtubule sliding activity in vitro. Plays a role in primary cilia formation. Plays a role in centriole cohesion and subdistal appendage organization and function. Regulates the formation of the subdistal appendage via recruitment of DCTN1 to the centriole. Also required for ciliary basal feet formation and microtubule anchoring to mother centriole. The chain is Kinesin-like protein KIF3A (KIF3A) from Homo sapiens (Human).